The sequence spans 137 residues: Large ribosomal subunit protein uL16 (137 aa).

It belongs to the universal ribosomal protein uL16 family. In terms of assembly, part of the 50S ribosomal subunit.

In terms of biological role, binds 23S rRNA and is also seen to make contacts with the A and possibly P site tRNAs. The sequence is that of Large ribosomal subunit protein uL16 from Streptococcus thermophilus (strain ATCC BAA-491 / LMD-9).